A 200-amino-acid polypeptide reads, in one-letter code: 3-isopropylmalate dehydratase small subunit (200 aa).

Belongs to the LeuD family. LeuD type 1 subfamily. As to quaternary structure, heterodimer of LeuC and LeuD.

The enzyme catalyses (2R,3S)-3-isopropylmalate = (2S)-2-isopropylmalate. The protein operates within amino-acid biosynthesis; L-leucine biosynthesis; L-leucine from 3-methyl-2-oxobutanoate: step 2/4. Its function is as follows. Catalyzes the isomerization between 2-isopropylmalate and 3-isopropylmalate, via the formation of 2-isopropylmaleate. The sequence is that of 3-isopropylmalate dehydratase small subunit from Campylobacter jejuni subsp. jejuni serotype O:6 (strain 81116 / NCTC 11828).